We begin with the raw amino-acid sequence, 603 residues long: UvrABC system protein C (603 aa).

The 78-residue stretch at 15–92 (DQPGCYLMKD…IKKHDPRFNI (78 aa)) folds into the GIY-YIG domain. In terms of domain architecture, UVR spans 197–232 (KTVKNDLMKKMQEAAENMEFEKAGEFRDQINAIETT).

The protein belongs to the UvrC family. Interacts with UvrB in an incision complex.

Its subcellular location is the cytoplasm. Its function is as follows. The UvrABC repair system catalyzes the recognition and processing of DNA lesions. UvrC both incises the 5' and 3' sides of the lesion. The N-terminal half is responsible for the 3' incision and the C-terminal half is responsible for the 5' incision. The sequence is that of UvrABC system protein C from Listeria innocua serovar 6a (strain ATCC BAA-680 / CLIP 11262).